A 158-amino-acid chain; its full sequence is Naphthalene 1,2-dioxygenase system, small oxygenase component (158 aa).

The protein belongs to the bacterial ring-hydroxylating dioxygenase beta subunit family. In terms of assembly, the naphthalene dioxygenase (NDO) multicomponent enzyme system is composed of an electron transfer component and a dioxygenase component (iron sulfur protein (ISP)). The electron transfer component is composed of a ferredoxin reductase (NdoR) and a ferredoxin (NdoA), and the dioxygenase component is formed of a heterohexamer (trimer of heterodimers) of three large alpha subunits (NdoB) and three small beta subunits (NdoC).

It participates in aromatic compound metabolism; naphthalene degradation. Functionally, component of the naphthalene dioxygenase (NDO) multicomponent enzyme system which catalyzes the incorporation of both atoms of molecular oxygen into naphthalene to form cis-(1R,2S)-dihydroxy-1,2-dihydronaphthalene. The beta subunit seems to have a structural role in the holoenzyme. The sequence is that of Naphthalene 1,2-dioxygenase system, small oxygenase component from Pseudomonas fluorescens.